The following is a 27-amino-acid chain: Toxin Bcg III 21.00 (27 aa).

The protein resides in the secreted. It localises to the nematocyst. Its function is as follows. Possible voltage-gated potassium channel (Kv) blocker. This is Toxin Bcg III 21.00 from Bunodosoma cangicum (Sea anemone).